Reading from the N-terminus, the 586-residue chain is Tetratricopeptide repeat protein 39B (586 aa).

TPR repeat units follow at residues 292–325 (SIIL…QQEW), 483–516 (CLVQ…EKRV), and 524–557 (PFTF…YKDY).

The protein belongs to the TTC39 family.

In terms of biological role, may be involved in lipid metabolism. The polypeptide is Tetratricopeptide repeat protein 39B (ttc39b) (Xenopus laevis (African clawed frog)).